The following is an 819-amino-acid chain: Serine/threonine-protein phosphatase 1 regulatory subunit 10 (819 aa).

The TFIIS N-terminal domain occupies 73–147; the sequence is KLLNNWLTYA…NDWMAVIRSQ (75 aa). 3 disordered regions span residues 151–204, 296–391, and 495–785; these read QPAD…KFRS, KIKK…RKTV, and SVPD…GGDM. Basic and acidic residues-rich tracts occupy residues 153–165 and 173–190; these read ADKE…EDAK and KTSE…EKPK. A compositionally biased stretch (polar residues) spans 305–327; sequence SPTSNKASPFDSKSPTEASSLTK. A PP1-binding motif motif is present at residues 386–415; it reads KKRKTVSWPEESRLREYFYFELDETERVNV. Basic and acidic residues predominate over residues 495–504; it reads SVPDTPHEPD. 2 stretches are compositionally biased toward polar residues: residues 533–543 and 560–578; these read MDQSTESQSPD and MGSS…QEIL. Residues 589–604 show a composition bias toward basic and acidic residues; sequence KPEDLMKQPDFSEKIK. The segment covering 606-618 has biased composition (low complexity); it reads LLGSLQNQNQNQG. Pro residues-rich tracts occupy residues 635-663 and 670-695; these read FPPP…PGPN and HGPP…PPPN. 2 stretches are compositionally biased toward basic and acidic residues: residues 704–715 and 758–777; these read HGGERGGMRGGD and HGDH…GDHR. The C3H1-type zinc finger occupies 785 to 813; the sequence is MSTRPTCRHFMMKGNCRYENNCAFYHPGI.

Component of the PNUTS-PP1 complex (also named PTW/PP1 complex).

The protein resides in the nucleus. Its subcellular location is the chromosome. Its function is as follows. Substrate-recognition component of the PNUTS-PP1 protein phosphatase complex, a protein phosphatase 1 (PP1) complex that promotes RNA polymerase II transcription pause-release, allowing transcription elongation. Promoter-proximal pausing by RNA polymerase II is a transcription halt following transcription initiation but prior to elongation, which acts as a checkpoint to control that transcripts are favorably configured for transcriptional elongation. The PNUTS-PP1 complex mediates the release of RNA polymerase II from promoter-proximal region of genes by catalyzing dephosphorylation of proteins involved in transcription. In some context, PPP1R10/PNUTS also acts as an inhibitor of protein phosphatase 1 (PP1) activity by preventing access to substrates. This Xenopus laevis (African clawed frog) protein is Serine/threonine-protein phosphatase 1 regulatory subunit 10 (ppp1r10).